A 926-amino-acid chain; its full sequence is Protein Niban 1 (926 aa).

G2 carries N-myristoyl glycine lipidation. Phosphoserine is present on residues S578, S581, S595, S601, and S640. 2 disordered regions span residues L604 to S699 and V719 to N889. Polar residues predominate over residues V661–L672. Position 699 is a phosphoserine (S699). Residues N733 to A745 are compositionally biased toward basic and acidic residues. S755 is subject to Phosphoserine. Residues C756–Q767 are compositionally biased toward basic and acidic residues. The span at G784–T797 shows a compositional bias: low complexity. The span at V840–P854 shows a compositional bias: polar residues. S923 bears the Phosphoserine mark.

The protein belongs to the Niban family.

It localises to the cytoplasm. Its subcellular location is the membrane. Regulates phosphorylation of a number of proteins involved in translation regulation including EIF2A, EIF4EBP1 and RPS6KB1. May be involved in the endoplasmic reticulum stress response. In Mus musculus (Mouse), this protein is Protein Niban 1.